The primary structure comprises 155 residues: Large ribosomal subunit protein eL24 (155 aa).

A compositionally biased stretch (basic and acidic residues) spans 97–129 (KPEIRKAKRDEKAKADKEKKKADKAARKADKAK). The interval 97-155 (KPEIRKAKRDEKAKADKEKKKADKAARKADKAKSAATQASKISKQQAKGAFQKVAATSR) is disordered. Residues 133–142 (TQASKISKQQ) show a composition bias toward polar residues.

Belongs to the eukaryotic ribosomal protein eL24 family.

The polypeptide is Large ribosomal subunit protein eL24 (RPL24) (Eremothecium gossypii (strain ATCC 10895 / CBS 109.51 / FGSC 9923 / NRRL Y-1056) (Yeast)).